Consider the following 232-residue polypeptide: Urease accessory protein UreF (232 aa).

It belongs to the UreF family. UreD, UreF and UreG form a complex that acts as a GTP-hydrolysis-dependent molecular chaperone, activating the urease apoprotein by helping to assemble the nickel containing metallocenter of UreC. The UreE protein probably delivers the nickel.

The protein localises to the cytoplasm. Functionally, required for maturation of urease via the functional incorporation of the urease nickel metallocenter. The polypeptide is Urease accessory protein UreF (Trichodesmium erythraeum (strain IMS101)).